The primary structure comprises 376 residues: Quinolinate synthase (376 aa).

Iminosuccinate-binding residues include histidine 57 and serine 78. Cysteine 123 contacts [4Fe-4S] cluster. Residues 149–151 (YAN) and serine 166 each bind iminosuccinate. Cysteine 210 provides a ligand contact to [4Fe-4S] cluster. Iminosuccinate is bound by residues 236 to 238 (HPE) and threonine 253. Cysteine 307 serves as a coordination point for [4Fe-4S] cluster.

It belongs to the quinolinate synthase family. Type 1 subfamily. Requires [4Fe-4S] cluster as cofactor.

Its subcellular location is the cytoplasm. The catalysed reaction is iminosuccinate + dihydroxyacetone phosphate = quinolinate + phosphate + 2 H2O + H(+). Its pathway is cofactor biosynthesis; NAD(+) biosynthesis; quinolinate from iminoaspartate: step 1/1. Functionally, catalyzes the condensation of iminoaspartate with dihydroxyacetone phosphate to form quinolinate. The protein is Quinolinate synthase of Paraburkholderia phymatum (strain DSM 17167 / CIP 108236 / LMG 21445 / STM815) (Burkholderia phymatum).